A 293-amino-acid chain; its full sequence is Bifunctional protein FolD (293 aa).

Residues 166–168 (GAS) and isoleucine 232 contribute to the NADP(+) site.

It belongs to the tetrahydrofolate dehydrogenase/cyclohydrolase family. Homodimer.

The enzyme catalyses (6R)-5,10-methylene-5,6,7,8-tetrahydrofolate + NADP(+) = (6R)-5,10-methenyltetrahydrofolate + NADPH. It catalyses the reaction (6R)-5,10-methenyltetrahydrofolate + H2O = (6R)-10-formyltetrahydrofolate + H(+). It participates in one-carbon metabolism; tetrahydrofolate interconversion. Its function is as follows. Catalyzes the oxidation of 5,10-methylenetetrahydrofolate to 5,10-methenyltetrahydrofolate and then the hydrolysis of 5,10-methenyltetrahydrofolate to 10-formyltetrahydrofolate. The polypeptide is Bifunctional protein FolD (Yersinia enterocolitica serotype O:8 / biotype 1B (strain NCTC 13174 / 8081)).